The primary structure comprises 105 residues: MADFLGMMKQAAQLQSKMKEMQEQLDQVEVEGSAGGSMVTVRMTAKMELKAVSIDPSLMKPEEREVLEDLLVAAQNDARRKAEEAMQERMKALTGGLSIPGLGLG.

It belongs to the YbaB/EbfC family. Homodimer.

The protein localises to the cytoplasm. Its subcellular location is the nucleoid. Its function is as follows. Binds to DNA and alters its conformation. May be involved in regulation of gene expression, nucleoid organization and DNA protection. The protein is Nucleoid-associated protein OCAR_7544/OCA5_c05960 of Afipia carboxidovorans (strain ATCC 49405 / DSM 1227 / KCTC 32145 / OM5) (Oligotropha carboxidovorans).